Here is a 347-residue protein sequence, read N- to C-terminus: Phosphate acyltransferase (347 aa).

Belongs to the PlsX family. As to quaternary structure, homodimer. Probably interacts with PlsY.

The protein localises to the cytoplasm. It catalyses the reaction a fatty acyl-[ACP] + phosphate = an acyl phosphate + holo-[ACP]. It functions in the pathway lipid metabolism; phospholipid metabolism. In terms of biological role, catalyzes the reversible formation of acyl-phosphate (acyl-PO(4)) from acyl-[acyl-carrier-protein] (acyl-ACP). This enzyme utilizes acyl-ACP as fatty acyl donor, but not acyl-CoA. The chain is Phosphate acyltransferase from Lawsonia intracellularis (strain PHE/MN1-00).